The following is a 552-amino-acid chain: ATP synthase subunit alpha (552 aa).

Residue 173-180 (GDRQTGKT) participates in ATP binding. Residues 526-552 (ASPLDPSAVRKESIPVHRAPARTDDEG) are disordered. The segment covering 533-552 (AVRKESIPVHRAPARTDDEG) has biased composition (basic and acidic residues).

This sequence belongs to the ATPase alpha/beta chains family. As to quaternary structure, F-type ATPases have 2 components, CF(1) - the catalytic core - and CF(0) - the membrane proton channel. CF(1) has five subunits: alpha(3), beta(3), gamma(1), delta(1), epsilon(1). CF(0) has three main subunits: a(1), b(2) and c(9-12). The alpha and beta chains form an alternating ring which encloses part of the gamma chain. CF(1) is attached to CF(0) by a central stalk formed by the gamma and epsilon chains, while a peripheral stalk is formed by the delta and b chains.

It is found in the cell membrane. The catalysed reaction is ATP + H2O + 4 H(+)(in) = ADP + phosphate + 5 H(+)(out). Functionally, produces ATP from ADP in the presence of a proton gradient across the membrane. The alpha chain is a regulatory subunit. In Frankia alni (strain DSM 45986 / CECT 9034 / ACN14a), this protein is ATP synthase subunit alpha.